A 159-amino-acid chain; its full sequence is MNDQIPMTILGVEKLRKELEMLKTIKRPKIIKSIIEARQHGDLKENSEYHAAREEQGFCEGRIKEIELKLSKARIIDITKVKNNGVIIFGSTVTILNLTSNQEFTYRIVGDDESNFKRKLISINSPMSRGLVGKKVSDVATIKTPVGDVKYKILKIEYN.

This sequence belongs to the GreA/GreB family.

Functionally, necessary for efficient RNA polymerase transcription elongation past template-encoded arresting sites. The arresting sites in DNA have the property of trapping a certain fraction of elongating RNA polymerases that pass through, resulting in locked ternary complexes. Cleavage of the nascent transcript by cleavage factors such as GreA or GreB allows the resumption of elongation from the new 3'terminus. GreA releases sequences of 2 to 3 nucleotides. The sequence is that of Transcription elongation factor GreA from Buchnera aphidicola subsp. Baizongia pistaciae (strain Bp).